Consider the following 336-residue polypeptide: HTH-type transcriptional regulator CdhR (336 aa).

One can recognise an HTH araC/xylS-type domain in the interval 213–311 (VQVIGEMERH…AASPSQDRAV (99 aa)). 2 consecutive DNA-binding regions (H-T-H motif) follow at residues 230 to 251 (LELAERIQVTRRQLERLFRVHL) and 278 to 301 (VLQVSLACGFESPSYFSRSYRARF). The interval 305–336 (PSQDRAVLPLKAPAATPPGAPAGHRTPRAERG) is disordered.

Its function is as follows. Induces the transcription of the PA5384-PA5388 operon in response to carnitine. This operon is involved in the degradation of L-carnitine, and allows P.aeruginosa to grow on L-carnitine as the sole source of carbon and nitrogen. The sequence is that of HTH-type transcriptional regulator CdhR (cdhR) from Pseudomonas aeruginosa (strain ATCC 15692 / DSM 22644 / CIP 104116 / JCM 14847 / LMG 12228 / 1C / PRS 101 / PAO1).